The following is a 442-amino-acid chain: Probable protein phosphatase 2C 15 (442 aa).

The 269-residue stretch at 35–303 folds into the PPM-type phosphatase domain; that stretch reads AAERPELQVG…DDTTCIVVDI (269 aa). Mn(2+) contacts are provided by Asp-80, Gly-81, Asp-255, and Asp-294. Residues 420–434 are compositionally biased toward basic and acidic residues; it reads KKEAMEGKRRSRDSS. The disordered stretch occupies residues 420–442; sequence KKEAMEGKRRSRDSSSRNSGSSE.

This sequence belongs to the PP2C family. Mg(2+) is required as a cofactor. Mn(2+) serves as cofactor.

It carries out the reaction O-phospho-L-seryl-[protein] + H2O = L-seryl-[protein] + phosphate. It catalyses the reaction O-phospho-L-threonyl-[protein] + H2O = L-threonyl-[protein] + phosphate. The chain is Probable protein phosphatase 2C 15 from Oryza sativa subsp. japonica (Rice).